Here is a 417-residue protein sequence, read N- to C-terminus: NADH-quinone oxidoreductase subunit D (417 aa).

The protein belongs to the complex I 49 kDa subunit family. As to quaternary structure, NDH-1 is composed of 14 different subunits. Subunits NuoB, C, D, E, F, and G constitute the peripheral sector of the complex.

It localises to the cell inner membrane. It catalyses the reaction a quinone + NADH + 5 H(+)(in) = a quinol + NAD(+) + 4 H(+)(out). Functionally, NDH-1 shuttles electrons from NADH, via FMN and iron-sulfur (Fe-S) centers, to quinones in the respiratory chain. The immediate electron acceptor for the enzyme in this species is believed to be ubiquinone. Couples the redox reaction to proton translocation (for every two electrons transferred, four hydrogen ions are translocated across the cytoplasmic membrane), and thus conserves the redox energy in a proton gradient. This chain is NADH-quinone oxidoreductase subunit D, found in Burkholderia orbicola (strain MC0-3).